Reading from the N-terminus, the 93-residue chain is Alpha-defensin 24 (93 aa).

The signal sequence occupies residues 1 to 19; it reads MKTLILLSALVLLAFQVQA. Residues 20-58 constitute a propeptide that is removed on maturation; it reads DPIQNTDEETKTEEQPGEEDQAVSVSFGDPEGASLQEES. A disordered region spans residues 23-54; the sequence is QNTDEETKTEEQPGEEDQAVSVSFGDPEGASL. 3 disulfides stabilise this stretch: cysteine 64–cysteine 92, cysteine 66–cysteine 81, and cysteine 71–cysteine 91.

Belongs to the alpha-defensin family.

Its subcellular location is the secreted. May have microbicidal activities. This chain is Alpha-defensin 24 (Defa24), found in Mus musculus (Mouse).